Here is a 401-residue protein sequence, read N- to C-terminus: L-rhamnonate dehydratase (401 aa).

Residues histidine 29 and arginine 55 each contribute to the substrate site. Mg(2+) contacts are provided by aspartate 222, glutamate 248, and glutamate 276. Residue histidine 325 is the Proton acceptor of the active site. Residue glutamate 345 participates in substrate binding.

Belongs to the mandelate racemase/muconate lactonizing enzyme family. RhamD subfamily. Homooctamer; tetramer of dimers. It depends on Mg(2+) as a cofactor.

The enzyme catalyses L-rhamnonate = 2-dehydro-3-deoxy-L-rhamnonate + H2O. Its function is as follows. Catalyzes the dehydration of L-rhamnonate to 2-keto-3-deoxy-L-rhamnonate (KDR). This Tolumonas auensis (strain DSM 9187 / NBRC 110442 / TA 4) protein is L-rhamnonate dehydratase.